Reading from the N-terminus, the 776-residue chain is Cullin-1 (776 aa).

R63 is subject to Omega-N-methylarginine. Positions 706–766 constitute a Cullin neddylation domain; the sequence is DRKLLIQAAI…IEKEYLERVD (61 aa). A Glycyl lysine isopeptide (Lys-Gly) (interchain with G-Cter in NEDD8) cross-link involves residue K720.

The protein belongs to the cullin family. In terms of assembly, component of multiple Cul1-RING E3 ubiquitin-protein ligase complexes commonly known as SCF (SKP1-CUL1-F-box) complexes, consisting of CUL1, SKP1, RBX1 and a variable F-box domain-containing protein as substrate-specific subunit. Component of the SCF(FBXW11) complex containing FBXW11. Component of the SCF(SKP2) complex containing SKP2, in which it interacts directly with SKP1, SKP2 and RBX1. Component of the SCF(FBXW2) complex containing FBXW2. Component of the SCF(FBXO32) complex containing FBXO32. Component of the probable SCF(FBXO7) complex containing FBXO7. Component of the SCF(FBXO10) complex containing FBXO10. Component of the SCF(FBXO11) complex containing FBXO11. Component of the SCF(FBXO25) complex containing FBXO25. Component of the SCF(FBXO33) complex containing FBXO33. Component of the probable SCF(FBXO4) complex containing FBXO4. Component of the SCF(FBXO44) complex, composed of SKP1, CUL1 and FBXO44. Component of the SCF(BTRC) complex, composed of SKP1, CUL1 and BTRC. This complex binds phosphorylated NFKBIA. Part of a SCF complex consisting of CUL1, RBX1, SKP1 and FBXO2. Component of a SCF(SKP2)-like complex containing CUL1, SKP1, TRIM21 and SKP2. Component of the SCF(FBXO17) complex, composed of SKP1, CUL1 and FBXO17. Component of the SCF(FBXO27) complex, composed of SKP1, CUL1 and FBXO27. Component of the SCF(CCNF) complex consisting of CUL1, RBX1, SKP1 and CCNF. Interacts with CCNF. Component of the SCF(FBXL3) complex composed of CUL1, SKP1, RBX1 and FBXL3. Component of the SCF(FBXL21) complex composed of CUL1, SKP1, RBX1 and FBXL21. Component of the SCF(FBXO9) composed of CUL1, SKP1, RBX1 and FBXO9. Component of the SCF(FBXW7) composed of CUL1, SKP1, RBX1 and FBXW7. Component of the SCF(FBXO31) complex composed of CUL1, SKP1, RBX1 and FBXO31. Interacts with CHEK2; mediates CHEK2 ubiquitination and regulates its function. Part of a complex with TIP120A/CAND1 and RBX1. The unneddylated form interacts with TIP120A/CAND1 and the interaction mediates the exchange of the F-box substrate-specific subunit. Can self-associate. Interacts with FBXW8. Interacts with RNF7. Interacts with TRIM21. Interacts with COPS2. Interacts with UBE2M. Identified in a complex with RBX1 and GLMN. Interacts with CEP68 as part of the SCF(FBXW11) complex; the interaction is probably mediated by FBXW11 and the complex also contains CDK5RAP2 and PCNT. Interacts (when neddylated) with ARIH1; leading to activate the E3 ligase activity of ARIH1. Interacts with COPS9 isoform 2. Interacts with UBXN1. Interacts with KAT7, probably as part of an SCF complex; the interaction mediates KAT7 ubiquitination. Interacts with NOTCH2. Part of a complex that contains DCUN1D5, CUL1 and RBX1; this complex is bridged by CUL1. Interacts (unneddylated form) with DCUN1D1, DCUN1D2, DCUN1D3, DCUN1D4 and DCUN1D5; these interactions promote the cullin neddylation. Interacts (via the C-terminal domain) with CUL7; the interaction seems to be mediated by FBXW8; it is likely specific to FBXW8, but not other F-box proteins. Interacts with UBR2, as part of SCF(BTRC) complex; the interaction mediates 'Lys-48'-linked ubiquitination of UBR2 and is regulated by DUSP22 in the T-cell receptor signaling pathway. As to quaternary structure, (Microbial infection) Interacts with Epstein-Barr virus BPLF1. (Microbial infection) Interacts with Human adenovirus early E1A protein; this interaction inhibits RBX1-CUL1-dependent elongation reaction of ubiquitin chains by the SCF(FBXW7) complex. In terms of assembly, (Microbial infection) Interacts with vaccinia virus protein C9L. As to quaternary structure, (Microbial infection) Interacts with Epstein-Barr virus (EBV) tegument protein BGLF2; this interaction might facilitate CUL1 recruitment to STAT2, leading to ubiquitination and degradation of the latter. In terms of processing, neddylated; which enhances the ubiquitination activity of SCF. Neddylation prevents binding of the inhibitor CAND1. Neddylation leads to structural rearrangment in the complex that allows interaction between the E2 ubiquitin-conjugating enzyme and the acceptor ubiquitin. Deneddylated via its interaction with the COP9 signalosome (CSN) complex. Post-translationally, (Microbial infection) Deneddylated by Epstein-Barr virus BPLF1 leading to a S-phase-like environment that is required for efficient replication of the viral genome. Expressed in lung fibroblasts.

Its pathway is protein modification; protein ubiquitination. Functionally, core component of multiple cullin-RING-based SCF (SKP1-CUL1-F-box protein) E3 ubiquitin-protein ligase complexes, which mediate the ubiquitination of proteins involved in cell cycle progression, signal transduction and transcription. SCF complexes and ARIH1 collaborate in tandem to mediate ubiquitination of target proteins. In the SCF complex, serves as a rigid scaffold that organizes the SKP1-F-box protein and RBX1 subunits. May contribute to catalysis through positioning of the substrate and the ubiquitin-conjugating enzyme. The E3 ubiquitin-protein ligase activity of the complex is dependent on the neddylation of the cullin subunit and exchange of the substrate recognition component is mediated by TIP120A/CAND1. The functional specificity of the SCF complex depends on the F-box protein as substrate recognition component. SCF(BTRC) and SCF(FBXW11) direct ubiquitination of CTNNB1 and participate in Wnt signaling. SCF(FBXW11) directs ubiquitination of phosphorylated NFKBIA. SCF(BTRC) directs ubiquitination of NFKBIB, NFKBIE, ATF4, SMAD3, SMAD4, CDC25A, FBXO5 and probably NFKB2. SCF(BTRC) and/or SCF(FBXW11) direct ubiquitination of CEP68. SCF(SKP2) directs ubiquitination of phosphorylated CDKN1B/p27kip and is involved in regulation of G1/S transition. SCF(SKP2) directs ubiquitination of ORC1, CDT1, RBL2, ELF4, CDKN1A, RAG2, FOXO1A, and probably MYC and TAL1. SCF(FBXW7) directs ubiquitination of CCNE1, NOTCH1 released notch intracellular domain (NICD), and probably PSEN1. SCF(FBXW2) directs ubiquitination of GCM1. SCF(FBXO32) directs ubiquitination of MYOD1. SCF(FBXO7) directs ubiquitination of BIRC2 and DLGAP5. SCF(FBXO33) directs ubiquitination of YBX1. SCF(FBXO1) directs ubiquitination of BCL6 and DTL but does not seem to direct ubiquitination of TP53. SCF(BTRC) mediates the ubiquitination of NFKBIA at 'Lys-21' and 'Lys-22'; the degradation frees the associated NFKB1-RELA dimer to translocate into the nucleus and to activate transcription. SCF(CCNF) directs ubiquitination of CCP110. SCF(FBXL3) and SCF(FBXL21) direct ubiquitination of CRY1 and CRY2. SCF(FBXO9) directs ubiquitination of TTI1 and TELO2. SCF(FBXO10) directs ubiquitination of BCL2. Neddylated CUL1-RBX1 ubiquitinates p53/TP53 recruited by Cul7-RING(FBXW8) complex. SCF(BTRC) directs 'Lys-48'-linked ubiquitination of UBR2 in the T-cell receptor signaling pathway. The SCF(FBXO31) protein ligase complex specifically mediates the ubiquitination of proteins amidated at their C-terminus in response to oxidative stress. The chain is Cullin-1 (CUL1) from Homo sapiens (Human).